A 419-amino-acid chain; its full sequence is Chalcone synthase D (419 aa).

Cysteine 164 is a catalytic residue.

Belongs to the thiolase-like superfamily. Chalcone/stilbene synthases family.

The enzyme catalyses (E)-4-coumaroyl-CoA + 3 malonyl-CoA + 3 H(+) = 2',4,4',6'-tetrahydroxychalcone + 3 CO2 + 4 CoA. The protein operates within secondary metabolite biosynthesis; flavonoid biosynthesis. Functionally, the primary product of this enzyme is 4,2',4',6'-tetrahydroxychalcone (also termed naringenin-chalcone or chalcone) which can under specific conditions spontaneously isomerize into naringenin. This Petunia hybrida (Petunia) protein is Chalcone synthase D (CHSD).